The primary structure comprises 171 residues: Glutamyl-tRNA(Gln) amidotransferase subunit F, mitochondrial (171 aa).

Belongs to the GatF family. As to quaternary structure, subunit of the heterotrimeric GatFAB amidotransferase (AdT) complex, composed of A, B and F subunits.

Its subcellular location is the mitochondrion inner membrane. It catalyses the reaction L-glutamyl-tRNA(Gln) + L-glutamine + ATP + H2O = L-glutaminyl-tRNA(Gln) + L-glutamate + ADP + phosphate + H(+). Its function is as follows. Allows the formation of correctly charged Gln-tRNA(Gln) through the transamidation of misacylated Glu-tRNA(Gln) in the mitochondria. The reaction takes place in the presence of glutamine and ATP through an activated gamma-phospho-Glu-tRNA(Gln). Required for proper protein synthesis within the mitochondrion. This is Glutamyl-tRNA(Gln) amidotransferase subunit F, mitochondrial from Zygosaccharomyces rouxii (strain ATCC 2623 / CBS 732 / NBRC 1130 / NCYC 568 / NRRL Y-229).